We begin with the raw amino-acid sequence, 359 residues long: Glutamine synthetase (359 aa).

The region spanning 28–107 (VMAEYIWIDG…VLAACYTADG (80 aa)) is the GS beta-grasp domain. In terms of domain architecture, GS catalytic spans 114 to 359 (HRDACAKLLE…GIITETMFEH (246 aa)). Ser-273 carries the phosphoserine modification. Thr-303 bears the Phosphothreonine mark. At Ser-305 the chain carries Phosphoserine.

This sequence belongs to the glutamine synthetase family. In terms of assembly, homooctamer.

The protein localises to the cytoplasm. It carries out the reaction L-glutamate + NH4(+) + ATP = L-glutamine + ADP + phosphate + H(+). This chain is Glutamine synthetase (gln1), found in Schizosaccharomyces pombe (strain 972 / ATCC 24843) (Fission yeast).